Consider the following 279-residue polypeptide: Large ribosomal subunit protein uL2 (279 aa).

Disordered regions lie at residues 31-61 (KSLLEPLTKSGGRNSAGRKTSRHRGGGHKRH) and 222-279 (GMAM…RNAK). The segment covering 49–61 (KTSRHRGGGHKRH) has biased composition (basic residues). Residues 232–242 (MGGGEGKSKSG) are compositionally biased toward gly residues. The segment covering 259-268 (LKTRNRKKAS) has biased composition (basic residues).

Belongs to the universal ribosomal protein uL2 family. In terms of assembly, part of the 50S ribosomal subunit. Forms a bridge to the 30S subunit in the 70S ribosome.

Functionally, one of the primary rRNA binding proteins. Required for association of the 30S and 50S subunits to form the 70S ribosome, for tRNA binding and peptide bond formation. It has been suggested to have peptidyltransferase activity; this is somewhat controversial. Makes several contacts with the 16S rRNA in the 70S ribosome. This is Large ribosomal subunit protein uL2 from Chlorobium chlorochromatii (strain CaD3).